We begin with the raw amino-acid sequence, 537 residues long: CTP synthase (537 aa).

An amidoligase domain region spans residues 1–267 (MAKFVFVTGG…ADIVLDKLGI (267 aa)). Position 13 (Ser-13) interacts with CTP. Ser-13 serves as a coordination point for UTP. 14–19 (SLGKGI) contacts ATP. Tyr-54 lines the L-glutamine pocket. Asp-71 contacts ATP. 2 residues coordinate Mg(2+): Asp-71 and Glu-141. Residues 148 to 150 (DIE), 188 to 193 (KTKPTQ), and Lys-224 each bind CTP. UTP-binding positions include 188-193 (KTKPTQ) and Lys-224. The Glutamine amidotransferase type-1 domain occupies 292 to 534 (TIALVGKYVS…IGAARKYKES (243 aa)). L-glutamine is bound at residue Gly-354. Residue Cys-381 is the Nucleophile; for glutamine hydrolysis of the active site. Residues 382-385 (LGMQ), Glu-405, and Arg-462 each bind L-glutamine. Residues His-507 and Glu-509 contribute to the active site.

The protein belongs to the CTP synthase family. Homotetramer.

It catalyses the reaction UTP + L-glutamine + ATP + H2O = CTP + L-glutamate + ADP + phosphate + 2 H(+). The catalysed reaction is L-glutamine + H2O = L-glutamate + NH4(+). The enzyme catalyses UTP + NH4(+) + ATP = CTP + ADP + phosphate + 2 H(+). Its pathway is pyrimidine metabolism; CTP biosynthesis via de novo pathway; CTP from UDP: step 2/2. Allosterically activated by GTP, when glutamine is the substrate; GTP has no effect on the reaction when ammonia is the substrate. The allosteric effector GTP functions by stabilizing the protein conformation that binds the tetrahedral intermediate(s) formed during glutamine hydrolysis. Inhibited by the product CTP, via allosteric rather than competitive inhibition. Catalyzes the ATP-dependent amination of UTP to CTP with either L-glutamine or ammonia as the source of nitrogen. Regulates intracellular CTP levels through interactions with the four ribonucleotide triphosphates. The sequence is that of CTP synthase from Pelotomaculum thermopropionicum (strain DSM 13744 / JCM 10971 / SI).